The sequence spans 98 residues: MSLVYMNIMTAFMVSLAGLLMYRSHLMSSLLCLEGMMLSLFVLATLTILNSHFTLASMMPIILLVFAACEAALGLSLLVMVSNTYGTDYVQNLNLLQC.

Transmembrane regions (helical) follow at residues 1-21 (MSLVYMNIMTAFMVSLAGLLM), 29-49 (SLLCLEGMMLSLFVLATLTIL), and 61-81 (IILLVFAACEAALGLSLLVMV).

The protein belongs to the complex I subunit 4L family. In terms of assembly, core subunit of respiratory chain NADH dehydrogenase (Complex I) which is composed of 45 different subunits.

It localises to the mitochondrion inner membrane. It carries out the reaction a ubiquinone + NADH + 5 H(+)(in) = a ubiquinol + NAD(+) + 4 H(+)(out). Its function is as follows. Core subunit of the mitochondrial membrane respiratory chain NADH dehydrogenase (Complex I) which catalyzes electron transfer from NADH through the respiratory chain, using ubiquinone as an electron acceptor. Part of the enzyme membrane arm which is embedded in the lipid bilayer and involved in proton translocation. The protein is NADH-ubiquinone oxidoreductase chain 4L (MT-ND4L) of Muntiacus feae (Fea's muntjac).